Reading from the N-terminus, the 443-residue chain is Ribosomal protein uS12 methylthiotransferase RimO (443 aa).

The region spanning 8–118 is the MTTase N-terminal domain; the sequence is PKVGFVSLGC…VVNAVHEVVP (111 aa). [4Fe-4S] cluster contacts are provided by cysteine 17, cysteine 53, cysteine 82, cysteine 151, cysteine 155, and cysteine 158. In terms of domain architecture, Radical SAM core spans 137-375; that stretch reads LTPRHYAYLK…MAHQQAISAA (239 aa). Residues 378–443 form the TRAM domain; it reads QLRIGKEIDV…DEYDMWAEPI (66 aa).

The protein belongs to the methylthiotransferase family. RimO subfamily. [4Fe-4S] cluster is required as a cofactor.

It localises to the cytoplasm. It catalyses the reaction L-aspartate(89)-[ribosomal protein uS12]-hydrogen + (sulfur carrier)-SH + AH2 + 2 S-adenosyl-L-methionine = 3-methylsulfanyl-L-aspartate(89)-[ribosomal protein uS12]-hydrogen + (sulfur carrier)-H + 5'-deoxyadenosine + L-methionine + A + S-adenosyl-L-homocysteine + 2 H(+). In terms of biological role, catalyzes the methylthiolation of an aspartic acid residue of ribosomal protein uS12. This is Ribosomal protein uS12 methylthiotransferase RimO from Pseudomonas putida (strain ATCC 700007 / DSM 6899 / JCM 31910 / BCRC 17059 / LMG 24140 / F1).